Consider the following 342-residue polypeptide: UDP-3-O-acylglucosamine N-acyltransferase (342 aa).

H253 acts as the Proton acceptor in catalysis.

The protein belongs to the transferase hexapeptide repeat family. LpxD subfamily. As to quaternary structure, homotrimer.

It catalyses the reaction a UDP-3-O-[(3R)-3-hydroxyacyl]-alpha-D-glucosamine + a (3R)-hydroxyacyl-[ACP] = a UDP-2-N,3-O-bis[(3R)-3-hydroxyacyl]-alpha-D-glucosamine + holo-[ACP] + H(+). Its pathway is bacterial outer membrane biogenesis; LPS lipid A biosynthesis. In terms of biological role, catalyzes the N-acylation of UDP-3-O-acylglucosamine using 3-hydroxyacyl-ACP as the acyl donor. Is involved in the biosynthesis of lipid A, a phosphorylated glycolipid that anchors the lipopolysaccharide to the outer membrane of the cell. The sequence is that of UDP-3-O-acylglucosamine N-acyltransferase from Rickettsia canadensis (strain McKiel).